The following is a 114-amino-acid chain: Large ribosomal subunit protein uL22 (114 aa).

This sequence belongs to the universal ribosomal protein uL22 family. In terms of assembly, part of the 50S ribosomal subunit.

This protein binds specifically to 23S rRNA; its binding is stimulated by other ribosomal proteins, e.g. L4, L17, and L20. It is important during the early stages of 50S assembly. It makes multiple contacts with different domains of the 23S rRNA in the assembled 50S subunit and ribosome. In terms of biological role, the globular domain of the protein is located near the polypeptide exit tunnel on the outside of the subunit, while an extended beta-hairpin is found that lines the wall of the exit tunnel in the center of the 70S ribosome. This chain is Large ribosomal subunit protein uL22, found in Ehrlichia canis (strain Jake).